The primary structure comprises 961 residues: Exportin-T (961 aa).

The protein belongs to the exportin family.

It is found in the cytoplasm. Its subcellular location is the nucleus. Functionally, mediates the nuclear export of aminoacylated tRNAs. In Danio rerio (Zebrafish), this protein is Exportin-T (xpot).